Consider the following 379-residue polypeptide: Chaperone protein DnaJ (379 aa).

One can recognise a J domain in the interval Asp5 to Gly70. The segment at Gly134–Thr212 adopts a CR-type zinc-finger fold. Positions 147, 150, 164, 167, 186, 189, 200, and 203 each coordinate Zn(2+). 4 CXXCXGXG motif repeats span residues Cys147 to Gly154, Cys164 to Gly171, Cys186 to Gly193, and Cys200 to Gly207.

Belongs to the DnaJ family. In terms of assembly, homodimer. Requires Zn(2+) as cofactor.

The protein resides in the cytoplasm. Its function is as follows. Participates actively in the response to hyperosmotic and heat shock by preventing the aggregation of stress-denatured proteins and by disaggregating proteins, also in an autonomous, DnaK-independent fashion. Unfolded proteins bind initially to DnaJ; upon interaction with the DnaJ-bound protein, DnaK hydrolyzes its bound ATP, resulting in the formation of a stable complex. GrpE releases ADP from DnaK; ATP binding to DnaK triggers the release of the substrate protein, thus completing the reaction cycle. Several rounds of ATP-dependent interactions between DnaJ, DnaK and GrpE are required for fully efficient folding. Also involved, together with DnaK and GrpE, in the DNA replication of plasmids through activation of initiation proteins. This chain is Chaperone protein DnaJ, found in Aliivibrio fischeri (strain ATCC 700601 / ES114) (Vibrio fischeri).